The sequence spans 385 residues: Na(+)/H(+) antiporter NhaA (385 aa).

11 helical membrane passes run 9 to 29, 45 to 65, 87 to 107, 114 to 134, 155 to 175, 198 to 218, 220 to 235, 245 to 265, 282 to 302, 312 to 332, and 345 to 365; these read YSAIFLLCSAALAIIFANVLD, IFGLITPHDIVADFLLAVFFF, IIPGVCAAGGILVPISIYLSV, GWPVPTATDVAFSLGILAIFG, AGIVIIATAFSVSISYWWIIV, TFLIIPAMLLCALAAWVSVYQ, GIHATIAGVMLGIMLN, ALEPYINGIILPAFAFLAAMV, ILLGLLFGKLLGISVFGIIAL, FFNLLVVSALGGIGFTVSLLM, and QGVIAVLIGSLLSAILAIILM.

The protein belongs to the NhaA Na(+)/H(+) (TC 2.A.33) antiporter family.

It is found in the cell membrane. It catalyses the reaction Na(+)(in) + 2 H(+)(out) = Na(+)(out) + 2 H(+)(in). Functionally, na(+)/H(+) antiporter that extrudes sodium in exchange for external protons. This is Na(+)/H(+) antiporter NhaA from Tropheryma whipplei (strain Twist) (Whipple's bacillus).